The following is a 178-amino-acid chain: ATP synthase subunit delta (178 aa).

The protein belongs to the ATPase delta chain family. In terms of assembly, F-type ATPases have 2 components, F(1) - the catalytic core - and F(0) - the membrane proton channel. F(1) has five subunits: alpha(3), beta(3), gamma(1), delta(1), epsilon(1). F(0) has three main subunits: a(1), b(2) and c(10-14). The alpha and beta chains form an alternating ring which encloses part of the gamma chain. F(1) is attached to F(0) by a central stalk formed by the gamma and epsilon chains, while a peripheral stalk is formed by the delta and b chains.

The protein resides in the cell inner membrane. In terms of biological role, f(1)F(0) ATP synthase produces ATP from ADP in the presence of a proton or sodium gradient. F-type ATPases consist of two structural domains, F(1) containing the extramembraneous catalytic core and F(0) containing the membrane proton channel, linked together by a central stalk and a peripheral stalk. During catalysis, ATP synthesis in the catalytic domain of F(1) is coupled via a rotary mechanism of the central stalk subunits to proton translocation. Its function is as follows. This protein is part of the stalk that links CF(0) to CF(1). It either transmits conformational changes from CF(0) to CF(1) or is implicated in proton conduction. The chain is ATP synthase subunit delta from Marinobacter nauticus (strain ATCC 700491 / DSM 11845 / VT8) (Marinobacter aquaeolei).